Here is a 320-residue protein sequence, read N- to C-terminus: GTP 3',8-cyclase (320 aa).

The region spanning 5 to 225 (QFGRKINYLR…IQLIKKDEKA (221 aa)) is the Radical SAM core domain. Arg14 is a GTP binding site. Residues Cys21 and Cys25 each coordinate [4Fe-4S] cluster. Tyr27 lines the S-adenosyl-L-methionine pocket. Cys28 is a [4Fe-4S] cluster binding site. Position 64 (Arg64) interacts with GTP. Position 68 (Gly68) interacts with S-adenosyl-L-methionine. Position 95 (Thr95) interacts with GTP. Position 119 (Ser119) interacts with S-adenosyl-L-methionine. Position 155 (Lys155) interacts with GTP. Met189 contributes to the S-adenosyl-L-methionine binding site. 2 residues coordinate [4Fe-4S] cluster: Cys248 and Cys251. 253-255 (RIR) is a binding site for GTP. Cys265 contacts [4Fe-4S] cluster.

The protein belongs to the radical SAM superfamily. MoaA family. Monomer and homodimer. [4Fe-4S] cluster is required as a cofactor.

The catalysed reaction is GTP + AH2 + S-adenosyl-L-methionine = (8S)-3',8-cyclo-7,8-dihydroguanosine 5'-triphosphate + 5'-deoxyadenosine + L-methionine + A + H(+). It participates in cofactor biosynthesis; molybdopterin biosynthesis. Its function is as follows. Catalyzes the cyclization of GTP to (8S)-3',8-cyclo-7,8-dihydroguanosine 5'-triphosphate. The sequence is that of GTP 3',8-cyclase from Campylobacter jejuni subsp. jejuni serotype O:6 (strain 81116 / NCTC 11828).